Here is a 193-residue protein sequence, read N- to C-terminus: Large ribosomal subunit protein uL5 (193 aa).

The protein belongs to the universal ribosomal protein uL5 family. Part of the 50S ribosomal subunit; part of the 5S rRNA/L5/L18/L25 subcomplex. Contacts the 5S rRNA and the P site tRNA. Forms a bridge to the 30S subunit in the 70S ribosome.

This is one of the proteins that bind and probably mediate the attachment of the 5S RNA into the large ribosomal subunit, where it forms part of the central protuberance. In the 70S ribosome it contacts protein S13 of the 30S subunit (bridge B1b), connecting the 2 subunits; this bridge is implicated in subunit movement. Contacts the P site tRNA; the 5S rRNA and some of its associated proteins might help stabilize positioning of ribosome-bound tRNAs. The protein is Large ribosomal subunit protein uL5 of Rhizorhabdus wittichii (strain DSM 6014 / CCUG 31198 / JCM 15750 / NBRC 105917 / EY 4224 / RW1) (Sphingomonas wittichii).